Here is a 291-residue protein sequence, read N- to C-terminus: N-acetylmannosamine kinase (291 aa).

ATP-binding positions include 5 to 12 (AIDIGGTK) and 132 to 139 (GVGGGVVS). Residues His156, Cys166, Cys168, and Cys173 each coordinate Zn(2+).

The protein belongs to the ROK (NagC/XylR) family. NanK subfamily. As to quaternary structure, homodimer.

It carries out the reaction an N-acyl-D-mannosamine + ATP = an N-acyl-D-mannosamine 6-phosphate + ADP + H(+). It functions in the pathway amino-sugar metabolism; N-acetylneuraminate degradation; D-fructose 6-phosphate from N-acetylneuraminate: step 2/5. Its function is as follows. Catalyzes the phosphorylation of N-acetylmannosamine (ManNAc) to ManNAc-6-P. The polypeptide is N-acetylmannosamine kinase (Escherichia coli O6:K15:H31 (strain 536 / UPEC)).